The primary structure comprises 392 residues: Stilbene synthase 5 (392 aa).

55 to 58 (KFNR) is a substrate binding site. Residue Cys-164 is part of the active site. Residues Leu-267 and 305 to 307 (GGP) contribute to the substrate site.

Belongs to the thiolase-like superfamily. Chalcone/stilbene synthases family. In terms of assembly, homodimer.

It is found in the cytoplasm. The catalysed reaction is 4-coumaroyl-CoA + 3 malonyl-CoA + 3 H(+) = trans-resveratrol + 4 CO2 + 4 CoA. It functions in the pathway phytoalexin biosynthesis; 3,4',5-trihydroxystilbene biosynthesis; 3,4',5-trihydroxystilbene from trans-4-coumarate: step 2/2. In terms of biological role, mediates resistance to pathogens which are sensitive to stilbenes. The sequence is that of Stilbene synthase 5 from Vitis vinifera (Grape).